The chain runs to 354 residues: uncharacterized protein (354 aa).

The N-terminal stretch at 1-21 (MRYLLIVITFFMGFSSLPAWA) is a signal peptide.

It to E.coli YbgO.

Its function is as follows. May be involved in a fimbrial system chaperoned by YqiH and exported by YqiG. This is an uncharacterized protein from Escherichia coli (strain K12).